A 725-amino-acid chain; its full sequence is Eukaryotic translation initiation factor 3 subunit B (725 aa).

Ser23 carries the phosphoserine modification. In terms of domain architecture, RRM spans 39-129 (TVVVIEGAPV…HTFVVRKLNQ (91 aa)). Ser135 bears the Phosphoserine mark. Thr136 bears the Phosphothreonine mark. WD repeat units lie at residues 190-229 (DREN…MCAR), 304-344 (DGKK…LVDK), and 347-386 (IKID…QPAR). Positions 630–671 (LTKEDMKKIRKKLKDYNRLFDEEDIAEQSSANRELAARRRQL) form a coiled coil.

The protein belongs to the eIF-3 subunit B family. As to quaternary structure, component of the eukaryotic translation initiation factor 3 (eIF-3) complex. The eIF-3 complex appears to include tif32/eif3a, SPAC25G10.08/eif3b, tif33/eif3c, SPBC4C3.07/eif3f, tif35/eif3g and sum1/eif3i. This set of common subunits may also associate exclusively with either moe1/eif3d and int6/eif3e, or with SPAC821.05/eif3h and SPAC1751.03/eif3m. The eIF-3 complex may also include SPAC3A12.13c/eif3j.

The protein resides in the cytoplasm. Its function is as follows. RNA-binding component of the eukaryotic translation initiation factor 3 (eIF-3) complex, which is involved in protein synthesis of a specialized repertoire of mRNAs and, together with other initiation factors, stimulates binding of mRNA and methionyl-tRNAi to the 40S ribosome. The eIF-3 complex specifically targets and initiates translation of a subset of mRNAs involved in cell proliferation. In Schizosaccharomyces pombe (strain 972 / ATCC 24843) (Fission yeast), this protein is Eukaryotic translation initiation factor 3 subunit B.